Reading from the N-terminus, the 445-residue chain is Exodeoxyribonuclease 7 large subunit (445 aa).

It belongs to the XseA family. As to quaternary structure, heterooligomer composed of large and small subunits.

It localises to the cytoplasm. The enzyme catalyses Exonucleolytic cleavage in either 5'- to 3'- or 3'- to 5'-direction to yield nucleoside 5'-phosphates.. Functionally, bidirectionally degrades single-stranded DNA into large acid-insoluble oligonucleotides, which are then degraded further into small acid-soluble oligonucleotides. This Staphylococcus saprophyticus subsp. saprophyticus (strain ATCC 15305 / DSM 20229 / NCIMB 8711 / NCTC 7292 / S-41) protein is Exodeoxyribonuclease 7 large subunit.